We begin with the raw amino-acid sequence, 84 residues long: Xenoxin-1 (84 aa).

The first 18 residues, 1 to 18 (MRYAIVFFLVCVITLGEA), serve as a signal peptide directing secretion. Cystine bridges form between cysteine 21–cysteine 42, cysteine 35–cysteine 55, cysteine 61–cysteine 76, and cysteine 77–cysteine 82.

Expressed by the skin dorsal glands.

The protein resides in the secreted. Its function is as follows. Lacks alpha-neurotoxic activity, has apparently no antibacterial activity, nor anti-coagulant potency. This Xenopus laevis (African clawed frog) protein is Xenoxin-1 (xenoxin-1).